The following is a 635-amino-acid chain: Threonine--tRNA ligase (635 aa).

The 61-residue stretch at 1-61 (MVSIRLPDGS…DRDAALAIIT (61 aa)) folds into the TGS domain. The interval 242-533 (DHRKLGKQLD…LIEHHAGAMP (292 aa)) is catalytic. Residues cysteine 333, histidine 384, and histidine 510 each coordinate Zn(2+).

Belongs to the class-II aminoacyl-tRNA synthetase family. Homodimer. Zn(2+) is required as a cofactor.

Its subcellular location is the cytoplasm. The enzyme catalyses tRNA(Thr) + L-threonine + ATP = L-threonyl-tRNA(Thr) + AMP + diphosphate + H(+). In terms of biological role, catalyzes the attachment of threonine to tRNA(Thr) in a two-step reaction: L-threonine is first activated by ATP to form Thr-AMP and then transferred to the acceptor end of tRNA(Thr). Also edits incorrectly charged L-seryl-tRNA(Thr). In Burkholderia ambifaria (strain ATCC BAA-244 / DSM 16087 / CCUG 44356 / LMG 19182 / AMMD) (Burkholderia cepacia (strain AMMD)), this protein is Threonine--tRNA ligase.